Here is a 305-residue protein sequence, read N- to C-terminus: Popeye domain-containing protein 3 (305 aa).

Residue N4 is glycosylated (N-linked (GlcNAc...) asparagine). The next 3 helical transmembrane spans lie at 34–54, 55–75, and 77–99; these read SILF…LYVF, SLLG…VCAA, and IFSW…TYQV. The tract at residues 273 to 305 is disordered; it reads PETPPVPPPRRLQRRSSGRPRPGVPNCSSPRKQ. A glycan (N-linked (GlcNAc...) asparagine) is linked at N298.

It belongs to the popeye family. As to expression, expressed first preferentially in atrium and later also in the subepicardial compact layer of the ventricles.

It is found in the membrane. Its function is as follows. May play a role in the maintenance of heart function mediated, at least in part, through cAMP-binding. May play a role in the regulation of KCNK2-mediated current amplitude. This Gallus gallus (Chicken) protein is Popeye domain-containing protein 3 (POPDC3).